We begin with the raw amino-acid sequence, 326 residues long: Tagatose 1,6-diphosphate aldolase (326 aa).

This sequence belongs to the aldolase LacD family.

It catalyses the reaction D-tagatofuranose 1,6-bisphosphate = D-glyceraldehyde 3-phosphate + dihydroxyacetone phosphate. Its pathway is carbohydrate metabolism; D-tagatose 6-phosphate degradation; D-glyceraldehyde 3-phosphate and glycerone phosphate from D-tagatose 6-phosphate: step 2/2. The protein is Tagatose 1,6-diphosphate aldolase of Staphylococcus aureus (strain Mu3 / ATCC 700698).